Reading from the N-terminus, the 358-residue chain is Valine dehydrogenase (358 aa).

Residue K88 is part of the active site. NAD(+) is bound at residue 188–194 (GVGKVGH).

The protein belongs to the Glu/Leu/Phe/Val dehydrogenases family. As to quaternary structure, homodimer.

Its subcellular location is the cytoplasm. It catalyses the reaction L-valine + NAD(+) + H2O = 3-methyl-2-oxobutanoate + NH4(+) + NADH + H(+). It functions in the pathway amino-acid degradation; L-valine degradation. Oxidative deamination of branched-chain amino acids. The catabolism of valine is the major source of fatty acid precursors for macrolide biosynthesis and a vital source of antibiotic precursors. The sequence is that of Valine dehydrogenase (vdh) from Streptomyces virginiae (Streptomyces cinnamonensis).